The sequence spans 78 residues: Small ribosomal subunit protein uS17 (78 aa).

Belongs to the universal ribosomal protein uS17 family. In terms of assembly, part of the 30S ribosomal subunit.

Its function is as follows. One of the primary rRNA binding proteins, it binds specifically to the 5'-end of 16S ribosomal RNA. This chain is Small ribosomal subunit protein uS17, found in Agrobacterium fabrum (strain C58 / ATCC 33970) (Agrobacterium tumefaciens (strain C58)).